A 625-amino-acid polypeptide reads, in one-letter code: MAKVIGIDLGTTNSAMAVYEGNEAKIIANKEGKNTTPSIVAFTDKGEILVGEPAKRQAVTNPKKTVYSIKRIMGLMFNEDKAKEAEKRLPYNIVDRNGACAVEIADKIYTPQEISAKILMKLKEDAQSYLGEDVTEAVITVPAYFNDSQRKATKEAGTIAGLNVLRIINEPTSAALAYGLDKKEAEKIMVYDLGGGTFDVTVLETGDNVVEVLATGGDAFLGGDDFDNRIIDWAAEEFKSDEGIDLKNDVMALQRLKDAAENAKKELSSAQETEINLPFITADASGPKHLVKKITRAKFESLIDDLIEDTIKKIEFVIKDAGLSQSDISEVVMVGGSTRIPKVQERVKAFISKDLNKSVNPDEVVAVGAAIQGGVLKGDVKDVLLLDVTPLSLGIETAGGISTKVVERGVTIPTKKTQIFSTYEDNQPAVSINVLQGERELARDNKSLGRFDLSGIPAAPRGVPQIEVTFDIDANGILTVSAKDKATGKSQEIKISGSSGLSDAEIEKMVKEAELHKEEDTKKKAIIELRNNADSLVYQTKKSLEEFKDKIESAEVEKIQSAVAALEETLKNENASKEELEEKIKNLTEVSHKLAEAAYAKEQGGTQQGTDTKKKDDDVIDAEVE.

T197 is subject to Phosphothreonine; by autocatalysis. Positions 598–625 (AYAKEQGGTQQGTDTKKKDDDVIDAEVE) are disordered.

This sequence belongs to the heat shock protein 70 family.

In terms of biological role, acts as a chaperone. The chain is Chaperone protein DnaK from Helicobacter hepaticus (strain ATCC 51449 / 3B1).